The primary structure comprises 116 residues: Flagellar transcriptional regulator FlhD (116 aa).

This sequence belongs to the FlhD family. As to quaternary structure, homodimer; disulfide-linked. Forms a heterohexamer composed of two FlhC and four FlhD subunits. Each FlhC binds a FlhD dimer, forming a heterotrimer, and a hexamer assembles by dimerization of two heterotrimers.

It is found in the cytoplasm. Functionally, functions in complex with FlhC as a master transcriptional regulator that regulates transcription of several flagellar and non-flagellar operons by binding to their promoter region. Activates expression of class 2 flagellar genes, including fliA, which is a flagellum-specific sigma factor that turns on the class 3 genes. Also regulates genes whose products function in a variety of physiological pathways. The sequence is that of Flagellar transcriptional regulator FlhD from Enterobacter sp. (strain 22).